The following is a 149-amino-acid chain: 2S seed storage albumin protein (149 aa).

The signal sequence occupies residues Met1–Leu22. Intrachain disulfides connect Cys38-Cys98, Cys52-Cys87, Cys88-Cys133, and Cys100-Cys140. No IgE-binding stretches follow at residues Gln41 to Asn53, Ala68 to Glu81, Leu84 to Glu95, and Glu97 to Met105. The tract at residues Glu108 to Thr117 is igE-binding. A no IgE-binding region spans residues Lys121 to Asn131. The segment at Lys132–His141 is igE-binding.

This sequence belongs to the 2S seed storage albumins family. In terms of tissue distribution, expressed in seeds (at protein level). Expressed in seeds.

Seed storage protein. This Fagopyrum tataricum (Tartarian buckwheat) protein is 2S seed storage albumin protein.